A 504-amino-acid polypeptide reads, in one-letter code: U3 snoRNP-associated protein-like YAO (504 aa).

Residues 1 to 120 are disordered; the sequence is MKYNNEKKKG…DDDDDEDDDE (120 aa). The segment covering 20 to 33 has biased composition (basic and acidic residues); that stretch reads GSNERDPFFEEEPK. 2 stretches are compositionally biased toward acidic residues: residues 41 to 54 and 70 to 81; these read DDDD…DAEE and EVEDEDEFADET. Residues 89–106 are compositionally biased toward basic and acidic residues; it reads LAEEMLNRRREAMRRERE. Acidic residues predominate over residues 107–120; sequence EADNDDDDDEDDDE. WD repeat units follow at residues 159–198, 220–259, 262–301, 304–342, 344–382, 413–452, and 456–496; these read KHRR…TDKY, NHSR…HVQA, GHRN…FITE, GHQG…RMIY, APAS…PVFV, SANS…IRPL, and PLTG…QNGV.

The protein belongs to the WD repeat RRP9 family. As to expression, expressed in tissues with active in cell division such as shoot apexes, root tips, lateral root primordia, embryos, endosperm, pollen grains and embryo sacs.

It is found in the nucleus. The protein localises to the nucleolus. Its function is as follows. Component of a nucleolar small nuclear ribonucleoprotein particle (snoRNP) thought to participate in the processing and modification of pre-ribosomal RNA. Essential for embryogenesis. Plays a critical role in embryo sac development and gametic cell fate. Required for the correct positioning of the first division plane of zygote. May function during early embryogenesis. The polypeptide is U3 snoRNP-associated protein-like YAO (Arabidopsis thaliana (Mouse-ear cress)).